Here is a 472-residue protein sequence, read N- to C-terminus: N(6)-adenine-specific methyltransferase METTL4 (472 aa).

Belongs to the MT-A70-like family.

The protein localises to the nucleus. It is found in the cytoplasm. It localises to the cytosol. Its subcellular location is the mitochondrion matrix. The enzyme catalyses a 2'-O-methyladenosine in U2 snRNA + S-adenosyl-L-methionine = an N(6)-methyl-2'-O-methyladenosine in U2 snRNA + S-adenosyl-L-homocysteine + H(+). The catalysed reaction is a 2'-deoxyadenosine in DNA + S-adenosyl-L-methionine = an N(6)-methyl-2'-deoxyadenosine in DNA + S-adenosyl-L-homocysteine + H(+). N(6)-adenine-specific methyltransferase that can methylate both RNAs and DNA. Acts as a N(6)-adenine-specific RNA methyltransferase by catalyzing formation of N6,2'-O-dimethyladenosine (m6A(m)) on internal positions of U2 small nuclear RNA (snRNA): methylates the 6th position of adenine residues with a pre-deposited 2'-O-methylation. Internal m6A(m) methylation of snRNAs regulates RNA splicing. Also able to act as a N(6)-adenine-specific DNA methyltransferase by mediating methylation of DNA on the 6th position of adenine (N(6)-methyladenosine). The existence of N(6)-methyladenosine (m6A) on DNA is however unclear in mammals, and additional evidences are required to confirm the role of the N(6)-adenine-specific DNA methyltransferase activity of METTL4 in vivo. Acts as a regulator of mitochondrial transcript levels and mitochondrial DNA (mtDNA) copy number by mediating mtDNA N(6)-methylation: m6A on mtDNA reduces transcription by repressing TFAM DNA-binding and bending. N(6)-methyladenosine deposition by METTL4 regulates Polycomb silencing by triggering ubiquitination and degradation of sensor proteins ASXL1 and MPND, leading to inactivation of the PR-DUB complex and subsequent preservation of Polycomb silencing. This is N(6)-adenine-specific methyltransferase METTL4 from Homo sapiens (Human).